Reading from the N-terminus, the 459-residue chain is Phosphoglucosamine mutase (459 aa).

The active-site Phosphoserine intermediate is the Ser106. The Mg(2+) site is built by Ser106, Asp247, Asp249, and Asp251. Ser106 carries the post-translational modification Phosphoserine.

Belongs to the phosphohexose mutase family. Mg(2+) is required as a cofactor. Activated by phosphorylation.

It carries out the reaction alpha-D-glucosamine 1-phosphate = D-glucosamine 6-phosphate. In terms of biological role, catalyzes the conversion of glucosamine-6-phosphate to glucosamine-1-phosphate. This chain is Phosphoglucosamine mutase, found in Chlamydia muridarum (strain MoPn / Nigg).